The sequence spans 269 residues: MPELPEVETSRRGIEPYLVGQTILYAVVRNARLRWPVSDEILTLSDQPVLSVQRRAKYLLLELPKGWIIIHLGMSGSLRVLSEETAAEKHDHVDLVVSNGKILRYTDPRRFGAWLWAKDLETSNVLAHLGPEPLSDEFTAQYLFDKSRNKRTLIKPWLMDNKVVVGVGNIYASESLFAAGILPDRAAGSLTDAESVLLVATIKAVLLHSIEQGGTTLRDFLQSDGKPGYFAQELQVYGRAGEPCRQCGHPIEIAKHGQRSTFFCRHCQH.

Pro-2 serves as the catalytic Schiff-base intermediate with DNA. The active-site Proton donor is the Glu-3. Lys-57 functions as the Proton donor; for beta-elimination activity in the catalytic mechanism. DNA is bound by residues His-90, Arg-109, and Lys-150. The FPG-type zinc finger occupies 235 to 269 (QVYGRAGEPCRQCGHPIEIAKHGQRSTFFCRHCQH). Residue Arg-259 is the Proton donor; for delta-elimination activity of the active site.

The protein belongs to the FPG family. As to quaternary structure, monomer. Requires Zn(2+) as cofactor.

It catalyses the reaction Hydrolysis of DNA containing ring-opened 7-methylguanine residues, releasing 2,6-diamino-4-hydroxy-5-(N-methyl)formamidopyrimidine.. It carries out the reaction 2'-deoxyribonucleotide-(2'-deoxyribose 5'-phosphate)-2'-deoxyribonucleotide-DNA = a 3'-end 2'-deoxyribonucleotide-(2,3-dehydro-2,3-deoxyribose 5'-phosphate)-DNA + a 5'-end 5'-phospho-2'-deoxyribonucleoside-DNA + H(+). Functionally, involved in base excision repair of DNA damaged by oxidation or by mutagenic agents. Acts as a DNA glycosylase that recognizes and removes damaged bases. Has a preference for oxidized purines, such as 7,8-dihydro-8-oxoguanine (8-oxoG). Has AP (apurinic/apyrimidinic) lyase activity and introduces nicks in the DNA strand. Cleaves the DNA backbone by beta-delta elimination to generate a single-strand break at the site of the removed base with both 3'- and 5'-phosphates. This Yersinia pseudotuberculosis serotype O:1b (strain IP 31758) protein is Formamidopyrimidine-DNA glycosylase.